The chain runs to 149 residues: D-aminoacyl-tRNA deacylase (149 aa).

The Gly-cisPro motif, important for rejection of L-amino acids motif lies at 137–138 (GP).

The protein belongs to the DTD family. As to quaternary structure, homodimer.

Its subcellular location is the cytoplasm. The enzyme catalyses glycyl-tRNA(Ala) + H2O = tRNA(Ala) + glycine + H(+). The catalysed reaction is a D-aminoacyl-tRNA + H2O = a tRNA + a D-alpha-amino acid + H(+). Its function is as follows. An aminoacyl-tRNA editing enzyme that deacylates mischarged D-aminoacyl-tRNAs. Also deacylates mischarged glycyl-tRNA(Ala), protecting cells against glycine mischarging by AlaRS. Acts via tRNA-based rather than protein-based catalysis; rejects L-amino acids rather than detecting D-amino acids in the active site. By recycling D-aminoacyl-tRNA to D-amino acids and free tRNA molecules, this enzyme counteracts the toxicity associated with the formation of D-aminoacyl-tRNA entities in vivo and helps enforce protein L-homochirality. The protein is D-aminoacyl-tRNA deacylase of Syntrophotalea carbinolica (strain DSM 2380 / NBRC 103641 / GraBd1) (Pelobacter carbinolicus).